The chain runs to 111 residues: Probable 4-amino-4-deoxy-L-arabinose-phosphoundecaprenol flippase subunit ArnE (111 aa).

3 helical membrane-spanning segments follow: residues 36–56 (IVLWLGLALACIGLAMMLWLL), 61–81 (VPVGIAYPMLSLNFVWVTLAA), and 88–108 (PVSPRHWCGVAFIIGGIVILG). Residues 40–109 (LGLALACIGL…IIGGIVILGS (70 aa)) enclose the EamA domain.

It belongs to the ArnE family. In terms of assembly, heterodimer of ArnE and ArnF.

It localises to the cell inner membrane. It participates in bacterial outer membrane biogenesis; lipopolysaccharide biosynthesis. In terms of biological role, translocates 4-amino-4-deoxy-L-arabinose-phosphoundecaprenol (alpha-L-Ara4N-phosphoundecaprenol) from the cytoplasmic to the periplasmic side of the inner membrane. This Shigella flexneri serotype 5b (strain 8401) protein is Probable 4-amino-4-deoxy-L-arabinose-phosphoundecaprenol flippase subunit ArnE.